The chain runs to 336 residues: Malate dehydrogenase, cytoplasmic (336 aa).

Residues 11–17 (GAAGQIG) and Asp42 each bind NAD(+). Arg92 and Arg98 together coordinate substrate. NAD(+) is bound by residues Asn105, Gln112, and 129–131 (VGN). Substrate is bound by residues Asn131 and Arg163. The active-site Proton acceptor is His188.

This sequence belongs to the LDH/MDH superfamily. MDH type 2 family. In terms of assembly, homodimer.

Its subcellular location is the cytoplasm. It carries out the reaction (S)-malate + NAD(+) = oxaloacetate + NADH + H(+). Catalyzes the reversible conversion of (S)-malate to oxaloacetate in the cytoplasm where oxaloacetate is used for gluconeogenesis. The protein is Malate dehydrogenase, cytoplasmic of Caenorhabditis elegans.